Reading from the N-terminus, the 115-residue chain is Regulator of ribonuclease activity B (115 aa).

Belongs to the RraB family. In terms of assembly, interacts with the C-terminal region of Rne.

It is found in the cytoplasm. Functionally, globally modulates RNA abundance by binding to RNase E (Rne) and regulating its endonucleolytic activity. Can modulate Rne action in a substrate-dependent manner by altering the composition of the degradosome. This Aeromonas salmonicida (strain A449) protein is Regulator of ribonuclease activity B.